The chain runs to 355 residues: Vacuolar protein sorting-associated protein 37C (355 aa).

The residue at position 29 (S29) is a Phosphoserine. In terms of domain architecture, VPS37 C-terminal spans V78–A167. Residues K159–Y355 form a disordered region. Composition is skewed to pro residues over residues A170–T186 and P194–P214. The segment covering A291–A304 has biased composition (low complexity). Residues P321–Y355 are compositionally biased toward pro residues.

Belongs to the VPS37 family. Component of the ESCRT-I complex (endosomal sorting complex required for transport I) which consists of TSG101, VPS28, a VPS37 protein (VPS37A to -D) and MVB12A or MVB12B in a 1:1:1:1 stoichiometry. Interacts with TSG101, VPS28, MVB12A and MVB12B. Component of the ESCRT-I complex (endosomal sorting complex required for transport I) which consists of TSG101, VPS28, a VPS37 protein (VPS37A to -D) and UBAP1 in a 1:1:1:1 stoichiometry. Interacts with HGS and STAM2. Interacts with CEP55. In terms of processing, phosphorylated by TBK1.

Its subcellular location is the late endosome membrane. Component of the ESCRT-I complex, a regulator of vesicular trafficking process. Required for the sorting of endocytic ubiquitinated cargos into multivesicular bodies. May be involved in cell growth and differentiation. This chain is Vacuolar protein sorting-associated protein 37C (VPS37C), found in Homo sapiens (Human).